The primary structure comprises 503 residues: Betaine aldehyde dehydrogenase 2 (503 aa).

161–170 contributes to the betaine aldehyde binding site; sequence WNYPLLMATW. Residue 238–243 coordinates NAD(+); it reads GSYETG. Residues Glu-260, 292–295, and Cys-453 contribute to the betaine aldehyde site; that span reads QICS. Catalysis depends on residues Glu-260 and Cys-294. 4-aminobutanal contacts are provided by residues 260 to 261 and Cys-294; that span reads EL. Trp-459 provides a ligand contact to 4-aminobutanal. The Microbody targeting signal motif lies at 501 to 503; sequence SKL.

This sequence belongs to the aldehyde dehydrogenase family. In terms of assembly, homodimer.

The protein resides in the peroxisome. It localises to the cytoplasm. The enzyme catalyses betaine aldehyde + NAD(+) + H2O = glycine betaine + NADH + 2 H(+). The protein operates within amine and polyamine biosynthesis; betaine biosynthesis via choline pathway; betaine from betaine aldehyde: step 1/1. In terms of biological role, dehydrogenase that can use N-acetyl-c-aminobutyraldehyde (NAGABald), gamma-guanidinobutyraldehyde (GGBald), betaine aldehyde (Bet-ald), gamma-aminobutyraldehyde (GAB-ald), acetaldehyde, 4-aminobutylaldehyde (AB-ald), 3-aminopropionaldehyde (AP-ald), 4-N-trimethylaminobutyraldehyde (TMAB-ald) and 3-N-trimethylaminopropionaldehyde (TMAP-ald) as substrates. Catalyzes the oxidation of GAB-ald more efficiently than Bet-ald. Mediates the conversion of GAB-ald into gamma-aminobutyric acid (GABA), and prevents the formation of 2-acetyl-1-pyrroline (2AP) which gives fragrant rice its aromatic properties. In Oryza sativa subsp. indica (Rice), this protein is Betaine aldehyde dehydrogenase 2 (BADH2).